The sequence spans 93 residues: MVTIRLRRTGKTKKPSYRLVVADSRAPRDGRFIEIVGHYNPVRQPKELNVKADRVRYWLGVGAQPSETVVRLLKQVGVLDADGKPAPVTPIEG.

It belongs to the bacterial ribosomal protein bS16 family.

This Roseiflexus castenholzii (strain DSM 13941 / HLO8) protein is Small ribosomal subunit protein bS16.